Here is a 335-residue protein sequence, read N- to C-terminus: Ubiquinone biosynthesis protein COQ4, mitochondrial (335 aa).

The N-terminal 10 residues, 1-10 (MLRLSLLRST), are a transit peptide targeting the mitochondrion. H210, D211, H214, and E226 together coordinate Zn(2+).

It belongs to the COQ4 family. In terms of assembly, component of a multi-subunit COQ enzyme complex, composed of at least COQ3, COQ4, COQ5, COQ6, COQ7 and COQ9. Interacts with COQ3. Requires Zn(2+) as cofactor.

The protein resides in the mitochondrion inner membrane. It catalyses the reaction 4-hydroxy-3-methoxy-5-(all-trans-hexaprenyl)benzoate + H(+) = 2-methoxy-6-(all-trans-hexaprenyl)phenol + CO2. Its pathway is cofactor biosynthesis; ubiquinone biosynthesis. Lyase that catalyzes the C1-decarboxylation of 4-hydroxy-3-methoxy-5-(all-trans-hexaprenyl)benzoic acid into 2-methoxy-6-(all-trans-hexaprenyl)phenol during ubiquinone biosynthesis. This chain is Ubiquinone biosynthesis protein COQ4, mitochondrial, found in Saccharomyces cerevisiae (strain AWRI1631) (Baker's yeast).